Here is a 93-residue protein sequence, read N- to C-terminus: Alpha-defensin 15 (93 aa).

The signal sequence occupies residues 1 to 19; sequence MKTLVLLSALVLLAFQVQA. A propeptide spanning residues 20–58 is cleaved from the precursor; sequence DPIQNTDEETKTEEQPGEDDQAVSVSFGDPEGSSLQEES. A disordered region spans residues 23 to 56; it reads QNTDEETKTEEQPGEDDQAVSVSFGDPEGSSLQE. Disulfide bonds link Cys64–Cys92, Cys66–Cys81, and Cys71–Cys91.

Belongs to the alpha-defensin family. As to expression, paneth cells of the small bowel.

Its subcellular location is the secreted. In terms of biological role, probably contributes to the antimicrobial barrier function of the small bowel mucosa. The protein is Alpha-defensin 15 (Defa15) of Mus musculus (Mouse).